The chain runs to 442 residues: MDDDDFGGFEAAETFDGEQGGNQAVSPAVPWATFPAVSGVRLSPASPELILDHDRSSPSSGHLRSDAVISSPDDTRADSSLVNQTISKVQLQQSAHTHLNIPLFPLGLTDESNHGALALEDEPEGPGVHVSNSQLRQKISSLETKLKASEEEKQRIKKDVESLMEKHSVLEKDFLKEKEQDAVSFQARYRELQEKHKQELEDMRKAGHEALSIIVDEYKALLQSSVKQQLDAIEKQYVSAIEKQAHRCEELLHAQHQRLLEVLDTEKELLKEKIQEALTQQSQEQKETLGKCLQEEMQKNKETLESAVKLEKEAMKDVITKAVEEERENLEKVHAEEREMWKTEHARDQERVAEAIQAAVQEQQRMSQEAVKAAIAEEQRRSEKAMEEAVKRTRDELVEYVREQRRLDQVTRQRSLSSLELFLSCAQKQLSALIATEPVDIE.

The GGA1-binding motif stretch occupies residues 1–16 (MDDDDFGGFEAAETFD). The tract at residues 1–27 (MDDDDFGGFEAAETFDGEQGGNQAVSP) is disordered. A phosphoserine mark is found at S43 and S46. The tract at residues 48–79 (ELILDHDRSSPSSGHLRSDAVISSPDDTRADS) is disordered. 2 coiled-coil regions span residues 127-213 (GVHV…ALSI) and 248-409 (CEEL…RLDQ). A homodimerization region spans residues 211–414 (LSIIVDEYKA…RRLDQVTRQR (204 aa)).

In terms of assembly, homodimer. Interacts with GGA1, GGA2 and AP1G1.

The protein localises to the membrane. The protein resides in the golgi apparatus. It localises to the trans-Golgi network membrane. It is found in the trans-Golgi network. Involved in the regulation of membrane traffic through the trans-Golgi network (TGN). Functions in close cooperation with the GGAs in the sorting of hydrolases to lysosomes. This is Coiled-coil domain-containing protein 91 (Ccdc91) from Rattus norvegicus (Rat).